The sequence spans 120 residues: uncharacterized protein (120 aa).

This is an uncharacterized protein from Escherichia coli O6:H1 (strain CFT073 / ATCC 700928 / UPEC).